Consider the following 377-residue polypeptide: Queuine tRNA-ribosyltransferase (377 aa).

The Proton acceptor role is filled by D89. Substrate-binding positions include 89 to 93 (DSGGF), D143, Q187, and G214. The RNA binding stretch occupies residues 245–251 (GVGKPED). Catalysis depends on D264, which acts as the Nucleophile. Residues 269 to 273 (TRNAR) are RNA binding; important for wobble base 34 recognition. Zn(2+) is bound by residues C302, C304, C307, and H333.

The protein belongs to the queuine tRNA-ribosyltransferase family. As to quaternary structure, homodimer. Within each dimer, one monomer is responsible for RNA recognition and catalysis, while the other monomer binds to the replacement base PreQ1. Zn(2+) serves as cofactor.

The catalysed reaction is 7-aminomethyl-7-carbaguanine + guanosine(34) in tRNA = 7-aminomethyl-7-carbaguanosine(34) in tRNA + guanine. Its pathway is tRNA modification; tRNA-queuosine biosynthesis. Catalyzes the base-exchange of a guanine (G) residue with the queuine precursor 7-aminomethyl-7-deazaguanine (PreQ1) at position 34 (anticodon wobble position) in tRNAs with GU(N) anticodons (tRNA-Asp, -Asn, -His and -Tyr). Catalysis occurs through a double-displacement mechanism. The nucleophile active site attacks the C1' of nucleotide 34 to detach the guanine base from the RNA, forming a covalent enzyme-RNA intermediate. The proton acceptor active site deprotonates the incoming PreQ1, allowing a nucleophilic attack on the C1' of the ribose to form the product. After dissociation, two additional enzymatic reactions on the tRNA convert PreQ1 to queuine (Q), resulting in the hypermodified nucleoside queuosine (7-(((4,5-cis-dihydroxy-2-cyclopenten-1-yl)amino)methyl)-7-deazaguanosine). The polypeptide is Queuine tRNA-ribosyltransferase (Shewanella piezotolerans (strain WP3 / JCM 13877)).